We begin with the raw amino-acid sequence, 316 residues long: MPSQNYSIISEFNLFGFSAFPQHLLPILFLLYLLMFLFTLLGNLLIMATIWIEHRLHTPMYLFLCTLSVSEILFTVAITPRMLADLLSTHHSITFVACANQMFFSFMFGFTHSFLLLVMGYDRYVAICHPLRYNVLMSPRDCAHLVACTWAGGSVMGMMVTTIVFHLTFCGSNVIHHFFCHVLSLLKLACENKTSSVIMGVMLVCVTALIGCLFLIILSYVFIVAAILRIPSAEGRHKTFSTCVSHLTVVVTHYSFASFIYLKPKGLHSMYSDALMATTYTVFTPFLSPIIFSLRNKELKNAINKNFYRKFCPPSS.

Residues 1–26 (MPSQNYSIISEFNLFGFSAFPQHLLP) are Extracellular-facing. An N-linked (GlcNAc...) asparagine glycan is attached at asparagine 5. A helical membrane pass occupies residues 27-47 (ILFLLYLLMFLFTLLGNLLIM). Topologically, residues 48-55 (ATIWIEHR) are cytoplasmic. Residues 56 to 76 (LHTPMYLFLCTLSVSEILFTV) form a helical membrane-spanning segment. Residues 77 to 100 (AITPRMLADLLSTHHSITFVACAN) lie on the Extracellular side of the membrane. A disulfide bond links cysteine 98 and cysteine 190. Residues 101 to 121 (QMFFSFMFGFTHSFLLLVMGY) form a helical membrane-spanning segment. Topologically, residues 122–140 (DRYVAICHPLRYNVLMSPR) are cytoplasmic. Residues 141 to 161 (DCAHLVACTWAGGSVMGMMVT) traverse the membrane as a helical segment. At 162 to 198 (TIVFHLTFCGSNVIHHFFCHVLSLLKLACENKTSSVI) the chain is on the extracellular side. Residues 199–219 (MGVMLVCVTALIGCLFLIILS) form a helical membrane-spanning segment. The Cytoplasmic segment spans residues 220–239 (YVFIVAAILRIPSAEGRHKT). A helical membrane pass occupies residues 240-260 (FSTCVSHLTVVVTHYSFASFI). The Extracellular portion of the chain corresponds to 261 to 273 (YLKPKGLHSMYSD). The helical transmembrane segment at 274–294 (ALMATTYTVFTPFLSPIIFSL) threads the bilayer. Residues 295 to 316 (RNKELKNAINKNFYRKFCPPSS) are Cytoplasmic-facing.

It belongs to the G-protein coupled receptor 1 family.

It is found in the cell membrane. In terms of biological role, odorant receptor. The polypeptide is Olfactory receptor 10H4 (OR10H4) (Homo sapiens (Human)).